The chain runs to 434 residues: UDP-N-acetylglucosamine 1-carboxyvinyltransferase (434 aa).

22-23 (KN) is a binding site for phosphoenolpyruvate. Arg-97 is a binding site for UDP-N-acetyl-alpha-D-glucosamine. Residue Asp-121 is the Proton donor of the active site. 2 residues coordinate UDP-N-acetyl-alpha-D-glucosamine: Asp-319 and Met-341.

The protein belongs to the EPSP synthase family. MurA subfamily.

It localises to the cytoplasm. It carries out the reaction phosphoenolpyruvate + UDP-N-acetyl-alpha-D-glucosamine = UDP-N-acetyl-3-O-(1-carboxyvinyl)-alpha-D-glucosamine + phosphate. Its pathway is cell wall biogenesis; peptidoglycan biosynthesis. In terms of biological role, cell wall formation. Adds enolpyruvyl to UDP-N-acetylglucosamine. The polypeptide is UDP-N-acetylglucosamine 1-carboxyvinyltransferase (Bacteroides thetaiotaomicron (strain ATCC 29148 / DSM 2079 / JCM 5827 / CCUG 10774 / NCTC 10582 / VPI-5482 / E50)).